The chain runs to 505 residues: Glutamate--cysteine ligase (505 aa).

This sequence belongs to the glutamate--cysteine ligase type 1 family. Type 1 subfamily.

The catalysed reaction is L-cysteine + L-glutamate + ATP = gamma-L-glutamyl-L-cysteine + ADP + phosphate + H(+). Its pathway is sulfur metabolism; glutathione biosynthesis; glutathione from L-cysteine and L-glutamate: step 1/2. The protein is Glutamate--cysteine ligase of Wigglesworthia glossinidia brevipalpis.